A 484-amino-acid chain; its full sequence is Protein arginine methyltransferase NDUFAF7 homolog, mitochondrial (484 aa).

The N-terminal 12 residues, M1–N12, are a transit peptide targeting the mitochondrion.

This sequence belongs to the NDUFAF7 family. In terms of assembly, homodimer. Interacts with ndufs2.

It is found in the mitochondrion. The catalysed reaction is L-arginyl-[protein] + 2 S-adenosyl-L-methionine = N(omega),N(omega)'-dimethyl-L-arginyl-[protein] + 2 S-adenosyl-L-homocysteine + 2 H(+). Its function is as follows. Involved in the assembly or stability of mitochondrial NADH:ubiquinone oxidoreductase complex (complex I). Acts as an arginine methyltransferase and probably acts by mediating arginine methylation of ndufs2. The chain is Protein arginine methyltransferase NDUFAF7 homolog, mitochondrial from Dictyostelium discoideum (Social amoeba).